A 102-amino-acid polypeptide reads, in one-letter code: Large ribosomal subunit protein uL24 (102 aa).

This sequence belongs to the universal ribosomal protein uL24 family. In terms of assembly, part of the 50S ribosomal subunit.

Functionally, one of two assembly initiator proteins, it binds directly to the 5'-end of the 23S rRNA, where it nucleates assembly of the 50S subunit. In terms of biological role, one of the proteins that surrounds the polypeptide exit tunnel on the outside of the subunit. The polypeptide is Large ribosomal subunit protein uL24 (Rhizobium rhizogenes (strain K84 / ATCC BAA-868) (Agrobacterium radiobacter)).